Consider the following 189-residue polypeptide: Large ribosomal subunit protein uL5c (189 aa).

It belongs to the universal ribosomal protein uL5 family. Part of the 50S ribosomal subunit; contacts the 5S rRNA.

It localises to the plastid. Its subcellular location is the chloroplast. In terms of biological role, binds 5S rRNA, forms part of the central protuberance of the 50S subunit. This Chara vulgaris (Common stonewort) protein is Large ribosomal subunit protein uL5c (rpl5).